Reading from the N-terminus, the 147-residue chain is MGGCMHSTWDHALHSRGEPRPSEAPASISAPSKMPKSVSISKQLASIKALKKGSDLEKAIATIALVFRNASDPDGKLGKATAKKLLQTQFKKFTEREETKPKYQDILSELDEHTENKLDFEDFVILLLSLAIMSDLLRNMWNENTMK.

The segment at 1-36 (MGGCMHSTWDHALHSRGEPRPSEAPASISAPSKMPK) is disordered. Basic and acidic residues predominate over residues 8 to 21 (TWDHALHSRGEPRP). Over residues 23 to 32 (EAPASISAPS) the composition is skewed to low complexity.

This sequence belongs to the S-100 family. Expressed exclusively in ciliated epithelial cells. Detected in ciliated epithelium of trachea and oviduct (at protein level).

It localises to the cell projection. It is found in the cilium. Functionally, may be a component of the linker structure that bridges the ciliary membrane and peripheral singlet microtubules. The chain is Sentan (Sntn) from Mus musculus (Mouse).